The sequence spans 93 residues: Auxin-induced protein 10A5 (93 aa).

This sequence belongs to the ARG7 family.

The polypeptide is Auxin-induced protein 10A5 (Glycine max (Soybean)).